The following is a 1531-amino-acid chain: Myosin-17 (1531 aa).

Residues 8–57 enclose the Myosin N-terminal SH3-like domain; it reads IVGSHVWIEDPGAAWIDGEVVKINGEEVHAHTTNGKTVVANIANVFPKDT. In terms of domain architecture, Myosin motor spans 62–732; it reads GGVDDMTKLS…QMAELDARRA (671 aa). ATP-binding positions include 156–163 and 209–217; these read GESGAGKT and NNNSSRFGK. Actin-binding stretches follow at residues 495–529, 531–554, 589–613, and 613–635; these read LIEK…YQTF, NYKR…AGEV, FPRL…KLQL, and LQSL…KPNN. IQ domains lie at 758–787, 783–812, 806–835, 831–860, and 854–883; these read LRGA…QAAA, RQAA…STIT, IRHS…MKAA, QMKA…AALS, and LQKA…AARD. Residues 884–1056 adopt a coiled-coil conformation; sequence TGALREAKDK…VLRQQALAIS (173 aa). A disordered region spans residues 1071-1090; that stretch reads LPRTPENGNYLNGGTKTTPD. The segment covering 1076 to 1090 has biased composition (polar residues); it reads ENGNYLNGGTKTTPD. Residues 1159-1470 form the Dilute domain; that stretch reads DRIIQTIATA…IANMRVMMTE (312 aa). Serine 1517 carries the post-translational modification Phosphoserine.

This sequence belongs to the TRAFAC class myosin-kinesin ATPase superfamily. Myosin family. Plant myosin class XI subfamily. In terms of assembly, homodimer. Interacts with MYOB1, MYOB2 and MYOB3. Interacts with PHOX1 and PHOX2. As to expression, expressed ubiquitously.

It localises to the cytoplasm. Myosin heavy chain that is required for the cell cycle-regulated transport of various organelles and proteins for their segregation. Functions by binding with its tail domain to receptor proteins on organelles and exerting force with its N-terminal motor domain against actin filaments, thereby transporting its cargo along polarized actin cables. Involved in the tip growth of root hair cells and in the elongation of trichome stalk and branches. Plays a major role in trafficking of Golgi stacks, mitochondria and peroxisomes during root hair development. Acts as the primary contributor to ER streaming with a major role in the movement of Golgi bodies. Required for development of pavement cells, trichomes, and stigmatic papillae. Together with XI-F, required for the regulation of organ bending, such as gravitropic root bending. The protein is Myosin-17 of Arabidopsis thaliana (Mouse-ear cress).